The chain runs to 343 residues: MIEMRLSDLAQQLNAKLHGDENIIITGVASINNAQVGHITFLKDQRFLSQLSSCRASAVILSKNNLIFCKIAALVVEDPYIAYVKIARLMDTTPKPSKNIASGAIIASDAILGQRVGIGANAVIESEVILGDDVIIGPGSFVGKKTRIGTGTRLWANVTIYHEVEIGECCLIQSGAIIGSDGFGYINDHGVWIKIPHLGTVKIGNNVEIGACTTIDRGTLDDTKIENGVIIDNQCQIAHNVIIGARTAIAGGVIMAGSLTIGRDCMIGGASVINGHINICDKVTITGMGMVIKAITQPGIYSSGIPVQLNTVWWKTAALIMRISNMNKRIKTIEEKLKKLLFL.

The active-site Proton acceptor is the H239.

It belongs to the transferase hexapeptide repeat family. LpxD subfamily. As to quaternary structure, homotrimer.

It carries out the reaction a UDP-3-O-[(3R)-3-hydroxyacyl]-alpha-D-glucosamine + a (3R)-hydroxyacyl-[ACP] = a UDP-2-N,3-O-bis[(3R)-3-hydroxyacyl]-alpha-D-glucosamine + holo-[ACP] + H(+). The enzyme catalyses UDP-3-O-[(3R)-3-hydroxytetradecanoyl]-alpha-D-glucosamine + (3R)-hydroxytetradecanoyl-[ACP] = UDP-2-N,3-O-bis[(3R)-3-hydroxytetradecanoyl]-alpha-D-glucosamine + holo-[ACP] + H(+). It participates in glycolipid biosynthesis; lipid IV(A) biosynthesis; lipid IV(A) from (3R)-3-hydroxytetradecanoyl-[acyl-carrier-protein] and UDP-N-acetyl-alpha-D-glucosamine: step 3/6. Its function is as follows. Catalyzes the N-acylation of UDP-3-O-(hydroxytetradecanoyl)glucosamine using 3-hydroxytetradecanoyl-ACP as the acyl donor. Is involved in the biosynthesis of lipid A, a phosphorylated glycolipid that anchors the lipopolysaccharide to the outer membrane of the cell. The sequence is that of UDP-3-O-(3-hydroxymyristoyl)glucosamine N-acyltransferase from Blochmanniella pennsylvanica (strain BPEN).